The sequence spans 348 residues: Ethanol acetyltransferase 2 (348 aa).

A mitochondrion-targeting transit peptide spans 1–19 (MIFNSLSIKRLSSTXTSLP). The region spanning 49-305 (IIFLHGIYGY…VMKERPQEYI (257 aa)) is the AB hydrolase-1 domain. Active-site charge relay system residues include Ser121, Asp145, and His294.

It belongs to the AB hydrolase superfamily.

It localises to the mitochondrion. The catalysed reaction is ethanol + acetyl-CoA = ethyl acetate + CoA. The enzyme catalyses acetyl-CoA + H2O = acetate + CoA + H(+). It carries out the reaction ethyl acetate + H2O = ethanol + acetate + H(+). Alcohol acetyltransferase that catalyzes the synthesis of ethyl acetate from ethanol and acetyl-CoA. Can also function as a thioesterase by hydrolyzing acetyl-CoA in the absence of ethanol, as well as esterase hydrolyzing ethyl acetate. The sequence is that of Ethanol acetyltransferase 2 (EAT2) from Hanseniaspora uvarum (Yeast).